The chain runs to 509 residues: MPRLVNGREAAPTYSNLVGFIFIFNLIVGTGALTLPGVFARAGWMLSLIVIVLLAIISYMTVTFIIEAMACANAIRNWQTLQALRQSRSSAENSENDDNADDVSLASGAEQVGDFERVPLTIQNREFHYYQLSHKFELGEMATLFFNEFGRVMFYLCLIVYLYGDLSIYSAAVARSLRDVVCDQTNGTDTNNLMYWPGDFENNTSLACWKEHTISRLNMYRVLLIGFTLIFGPFVYFNVQKTKYLQMLTAAFRWMAFTLMICISLKLLISRGAKGHPATFNVYGIPSLFGACVYSFMCHHSLPSLLAPIRHKSMVSKILSIDYIIICAFYILLAMTGIFAFERIEDLYTLDFLPYDVAYVDFWSGLLICIDYFLALFPIFTLSTSFPIVAITLKNNLQSLFLDMSQYESYSVILRLCFPLLAIIPPFCITYFTESLSSLVAFTGTYAGTGIQYIIPVFLVYFARRTCSELLGSGVVNRFKSPFKSSAWLVFVFIWSILCVCLVSINLFS.

Over 1–19 (MPRLVNGREAAPTYSNLVG) the chain is Cytoplasmic. Residues 20-40 (FIFIFNLIVGTGALTLPGVFA) form a helical membrane-spanning segment. Residues 41–45 (RAGWM) lie on the Extracellular side of the membrane. Residues 46-66 (LSLIVIVLLAIISYMTVTFII) traverse the membrane as a helical segment. The Cytoplasmic segment spans residues 67–151 (EAMACANAIR…ATLFFNEFGR (85 aa)). The chain crosses the membrane as a helical span at residues 152–172 (VMFYLCLIVYLYGDLSIYSAA). Residues 173–218 (VARSLRDVVCDQTNGTDTNNLMYWPGDFENNTSLACWKEHTISRLN) lie on the Extracellular side of the membrane. 3 N-linked (GlcNAc...) asparagine glycosylation sites follow: asparagine 186, asparagine 202, and asparagine 203. Residues 219–239 (MYRVLLIGFTLIFGPFVYFNV) traverse the membrane as a helical segment. Residues 240 to 248 (QKTKYLQML) lie on the Cytoplasmic side of the membrane. The helical transmembrane segment at 249-269 (TAAFRWMAFTLMICISLKLLI) threads the bilayer. Residues 270–277 (SRGAKGHP) are Extracellular-facing. A helical transmembrane segment spans residues 278-298 (ATFNVYGIPSLFGACVYSFMC). Over 299–320 (HHSLPSLLAPIRHKSMVSKILS) the chain is Cytoplasmic. A helical transmembrane segment spans residues 321-341 (IDYIIICAFYILLAMTGIFAF). The Extracellular portion of the chain corresponds to 342-361 (ERIEDLYTLDFLPYDVAYVD). The chain crosses the membrane as a helical span at residues 362–382 (FWSGLLICIDYFLALFPIFTL). The Cytoplasmic segment spans residues 383-411 (STSFPIVAITLKNNLQSLFLDMSQYESYS). A helical transmembrane segment spans residues 412 to 432 (VILRLCFPLLAIIPPFCITYF). The Extracellular portion of the chain corresponds to 433–439 (TESLSSL). The helical transmembrane segment at 440–460 (VAFTGTYAGTGIQYIIPVFLV) threads the bilayer. Topologically, residues 461 to 487 (YFARRTCSELLGSGVVNRFKSPFKSSA) are cytoplasmic. The chain crosses the membrane as a helical span at residues 488–508 (WLVFVFIWSILCVCLVSINLF). Residue serine 509 is a topological domain, extracellular.

Belongs to the TMEM104 family.

It localises to the membrane. The polypeptide is Transmembrane protein 104 homolog (Drosophila melanogaster (Fruit fly)).